A 1257-amino-acid chain; its full sequence is uncharacterized protein (1257 aa).

The disordered stretch occupies residues 1–26 (MNFSNKPNKSRKKSNRKNKKSNKSNT). Over residues 8–22 (NKSRKKSNRKNKKSN) the composition is skewed to basic residues.

It is found in the virion. This is an uncharacterized protein from Acanthamoeba polyphaga mimivirus (APMV).